The chain runs to 165 residues: Phosphopantetheine adenylyltransferase (165 aa).

Ser-9 is a binding site for substrate. ATP contacts are provided by residues 9–10 (SF) and His-17. Positions 41, 73, and 87 each coordinate substrate. ATP-binding positions include 88–90 (GLR), Glu-98, and 123–129 (FTLLSSS).

This sequence belongs to the bacterial CoaD family. Homohexamer. Mg(2+) is required as a cofactor.

The protein localises to the cytoplasm. It catalyses the reaction (R)-4'-phosphopantetheine + ATP + H(+) = 3'-dephospho-CoA + diphosphate. The protein operates within cofactor biosynthesis; coenzyme A biosynthesis; CoA from (R)-pantothenate: step 4/5. Reversibly transfers an adenylyl group from ATP to 4'-phosphopantetheine, yielding dephospho-CoA (dPCoA) and pyrophosphate. The sequence is that of Phosphopantetheine adenylyltransferase from Herpetosiphon aurantiacus (strain ATCC 23779 / DSM 785 / 114-95).